Consider the following 681-residue polypeptide: PAB-dependent poly(A)-specific ribonuclease subunit pan3-like (681 aa).

The C3H1-type zinc finger occupies 9-38 (FSTNIPCRNEQLYGRCPYIDKGCFFQHKNQ). 2 disordered regions span residues 38–58 (QDNAPASSKPPSATAIDPQNS) and 82–123 (SSAS…TVSL). Residues 41–50 (APASSKPPSA) show a composition bias toward low complexity. Positions 96–106 (KSYSSALSSGK) are enriched in polar residues. Ser165 carries the phosphoserine modification.

It belongs to the protein kinase superfamily. PAN3 family.

The protein localises to the cytoplasm. Regulatory subunit of the poly(A)-nuclease (PAN) deadenylation complex. The polypeptide is PAB-dependent poly(A)-specific ribonuclease subunit pan3-like (Schizosaccharomyces pombe (strain 972 / ATCC 24843) (Fission yeast)).